A 270-amino-acid chain; its full sequence is Undecaprenyl-diphosphatase 1 (270 aa).

Helical transmembrane passes span 41–61 (IEGFSFELLMNAGSLIAVLLV), 88–108 (FRFIIYLIIATIPAGVIGVLF), 117–137 (KDGVRITAVTLLITGLALFLI), 192–212 (FSFLLYIPVSLGGTILSITDI), 218–238 (LGELFLPYLFAFIASVIATYF), and 250–270 (GNLVYFSIYCFVIGIAVLIFA).

Belongs to the UppP family.

The protein resides in the cell membrane. It carries out the reaction di-trans,octa-cis-undecaprenyl diphosphate + H2O = di-trans,octa-cis-undecaprenyl phosphate + phosphate + H(+). Its function is as follows. Catalyzes the dephosphorylation of undecaprenyl diphosphate (UPP). Confers resistance to bacitracin. The polypeptide is Undecaprenyl-diphosphatase 1 (Bacillus licheniformis (strain ATCC 14580 / DSM 13 / JCM 2505 / CCUG 7422 / NBRC 12200 / NCIMB 9375 / NCTC 10341 / NRRL NRS-1264 / Gibson 46)).